A 203-amino-acid polypeptide reads, in one-letter code: Guanylate kinase (203 aa).

Residues 3–181 enclose the Guanylate kinase-like domain; sequence GTLYIVAAPS…AVSEMCAIFT (179 aa). 10–17 lines the ATP pocket; it reads APSGAGKS.

It belongs to the guanylate kinase family.

Its subcellular location is the cytoplasm. It carries out the reaction GMP + ATP = GDP + ADP. Essential for recycling GMP and indirectly, cGMP. This Xanthomonas oryzae pv. oryzae (strain MAFF 311018) protein is Guanylate kinase.